The following is a 667-amino-acid chain: Heat shock protein DDB_G0283913 (667 aa).

A run of 2 helical transmembrane segments spans residues 2–22 and 224–244; these read FVGT…KKIL and MFIC…LNEL. Positions 18–82 form a coiled coil; that stretch reads IKKILKRKKE…ELAKKLNCYI (65 aa). The interval 432–478 is disordered; that stretch reads IDDTIQDNDKSGSEVSTPTISSSSSSPLQPIIKDEKDDNIENKSDEA. A compositionally biased stretch (low complexity) spans 444–457; sequence SEVSTPTISSSSSS. Residues 463–477 show a composition bias toward basic and acidic residues; it reads IKDEKDDNIENKSDE. One can recognise a sHSP domain in the interval 551–667; sequence MVFSSGFKPF…VITFKFEKIG (117 aa).

It belongs to the small heat shock protein (HSP20) family.

It is found in the membrane. The protein is Heat shock protein DDB_G0283913 of Dictyostelium discoideum (Social amoeba).